A 200-amino-acid polypeptide reads, in one-letter code: Transcriptional repressor NrdR (200 aa).

A zinc finger spans residues C3–C34. The region spanning I49–D139 is the ATP-cone domain. The interval L158–K200 is disordered. Positions L186–K200 are enriched in polar residues.

Belongs to the NrdR family. It depends on Zn(2+) as a cofactor.

Functionally, negatively regulates transcription of bacterial ribonucleotide reductase nrd genes and operons by binding to NrdR-boxes. This Synechococcus sp. (strain JA-3-3Ab) (Cyanobacteria bacterium Yellowstone A-Prime) protein is Transcriptional repressor NrdR.